A 127-amino-acid polypeptide reads, in one-letter code: Glycine cleavage system H protein (127 aa).

The region spanning 22-104 (EVVIGITHFA…YEGAWMVKVE (83 aa)) is the Lipoyl-binding domain. Lys63 carries the N6-lipoyllysine modification.

Belongs to the GcvH family. As to quaternary structure, the glycine cleavage system is composed of four proteins: P, T, L and H. The cofactor is (R)-lipoate.

Functionally, the glycine cleavage system catalyzes the degradation of glycine. The H protein shuttles the methylamine group of glycine from the P protein to the T protein. Its function is as follows. Is also involved in protein lipoylation via its role as an octanoyl/lipoyl carrier protein intermediate. This is Glycine cleavage system H protein from Bacillus cereus (strain G9842).